The sequence spans 565 residues: Probable peptidoglycan D,D-transpeptidase PbpC (565 aa).

The chain crosses the membrane as a helical span at residues 10–30; the sequence is FILVVTLFVLASLAVSGRLVY. The active-site Acyl-ester intermediate is the Ser289.

Belongs to the transpeptidase family. FtsI subfamily.

It is found in the cell inner membrane. The catalysed reaction is Preferential cleavage: (Ac)2-L-Lys-D-Ala-|-D-Ala. Also transpeptidation of peptidyl-alanyl moieties that are N-acyl substituents of D-alanine.. The protein operates within cell wall biogenesis; peptidoglycan biosynthesis. Functionally, catalyzes cross-linking of the peptidoglycan cell wall at the division septum. Binds penicillin. This chain is Probable peptidoglycan D,D-transpeptidase PbpC, found in Pseudomonas aeruginosa (strain ATCC 15692 / DSM 22644 / CIP 104116 / JCM 14847 / LMG 12228 / 1C / PRS 101 / PAO1).